Reading from the N-terminus, the 556-residue chain is Formate--tetrahydrofolate ligase (556 aa).

65–72 (TPAGEGKS) lines the ATP pocket.

It belongs to the formate--tetrahydrofolate ligase family.

The enzyme catalyses (6S)-5,6,7,8-tetrahydrofolate + formate + ATP = (6R)-10-formyltetrahydrofolate + ADP + phosphate. The protein operates within one-carbon metabolism; tetrahydrofolate interconversion. This Natranaerobius thermophilus (strain ATCC BAA-1301 / DSM 18059 / JW/NM-WN-LF) protein is Formate--tetrahydrofolate ligase.